Here is a 295-residue protein sequence, read N- to C-terminus: Protein PAR32 (295 aa).

Ala2 carries the N-acetylalanine modification. A phosphoserine mark is found at Ser36, Ser39, Ser47, Ser123, Ser138, Ser141, and Ser147. Positions Ser134–Ala153 are enriched in polar residues. Disordered regions lie at residues Ser134 to Val156 and Thr217 to Asn295. Positions Thr217 to Gly227 are enriched in basic residues. The residue at position 246 (Ser246) is a Phosphoserine. Residues Ser246–His256 are compositionally biased toward polar residues. The span at Lys265–Lys274 shows a compositional bias: basic and acidic residues. Residues Glu275–Ser284 are compositionally biased toward basic residues. Low complexity predominate over residues Gly285–Asn295.

Post-translationally, hyperphosphorylated after treatment with rapamycin in a TAP42-dependent manner.

The protein localises to the cytoplasm. Functionally, involved in resistance to cisplatin. The polypeptide is Protein PAR32 (PAR32) (Saccharomyces cerevisiae (strain ATCC 204508 / S288c) (Baker's yeast)).